The primary structure comprises 153 residues: Large ribosomal subunit protein uL15 (153 aa).

The segment at 1 to 48 (MRLNELSPAPGSKKDRKRVGRGDAGRGNYSGRGMKGQKARSGGATRPG) is disordered.

It belongs to the universal ribosomal protein uL15 family. In terms of assembly, part of the 50S ribosomal subunit.

Binds to the 23S rRNA. This chain is Large ribosomal subunit protein uL15, found in Dehalococcoides mccartyi (strain ATCC BAA-2266 / KCTC 15142 / 195) (Dehalococcoides ethenogenes (strain 195)).